We begin with the raw amino-acid sequence, 1696 residues long: E3 ubiquitin-protein ligase listerin (1696 aa).

17 HEAT repeats span residues 17 to 55 (RGVL…KVKK), 102 to 140 (FCKE…KYFR), 144 to 181 (CSLL…WKYS), 209 to 250 (AEAS…CWEH), 252 to 289 (NAQK…RVPT), 354 to 394 (LISD…KAES), 431 to 468 (EKNL…GEGD), 542 to 580 (FPSI…PAVQ), 596 to 634 (EESD…KWSV), 921 to 958 (LCTA…AEML), 992 to 1029 (MDLS…KRGA), 1108 to 1148 (DLCQ…LIGL), 1150 to 1188 (VEMI…WLES), 1245 to 1282 (GIYS…TLGY), 1307 to 1344 (DSLQ…DLPG), 1371 to 1405 (VLAI…CFVL), and 1406 to 1442 (GYLL…LNKL). Residues 1645–1692 (CMICFSVIHGSNYSLPKKACRTCKKKFHSECLYKWFTSSNKSTCPLCR) form an RING-type zinc finger.

It belongs to the LTN1 family. As to quaternary structure, component of the ribosome quality control complex (RQC), composed of at least the E3 ubiquitin ligase LTN1 and NEMF associated with the 60S ribosomal subunit. The complex probably also contains TCF25 as well as VCP/p97 and its ubiquitin-binding cofactors.

The protein localises to the cytoplasm. It localises to the cytosol. It catalyses the reaction S-ubiquitinyl-[E2 ubiquitin-conjugating enzyme]-L-cysteine + [acceptor protein]-L-lysine = [E2 ubiquitin-conjugating enzyme]-L-cysteine + N(6)-ubiquitinyl-[acceptor protein]-L-lysine.. It functions in the pathway protein modification; protein ubiquitination. In terms of biological role, E3 ubiquitin-protein ligase component of the ribosome quality control complex (RQC), a ribosome-associated complex that mediates ubiquitination and extraction of incompletely synthesized nascent chains for proteasomal degradation. Within the RQC complex, LTN1 is recruited to stalled 60S ribosomal subunits by NEMF and mediates ubiquitination of stalled nascent chains. Ubiquitination leads to VCP/p97 recruitment for extraction and degradation of the incomplete translation product. The sequence is that of E3 ubiquitin-protein ligase listerin (ltn1) from Xenopus tropicalis (Western clawed frog).